The primary structure comprises 880 residues: Interference hedgehog (880 aa).

An N-terminal signal peptide occupies residues methionine 1 to alanine 20. Residues isoleucine 21–threonine 703 lie on the Extracellular side of the membrane. Ig-like C2-type domains are found at residues proline 45–leucine 142, proline 132–threonine 234, proline 252–valine 340, and proline 346–asparagine 432. 4 disulfides stabilise this stretch: cysteine 68-cysteine 126, cysteine 173-cysteine 220, cysteine 276-cysteine 324, and cysteine 367-cysteine 414. Asparagine 102 and asparagine 209 each carry an N-linked (GlcNAc...) asparagine glycan. A disordered region spans residues glycine 426–valine 467. Fibronectin type-III domains follow at residues proline 461–glycine 567 and valine 575–proline 670. N-linked (GlcNAc...) asparagine glycosylation occurs at asparagine 466. Residues arginine 497, lysine 501, lysine 503, and arginine 541 each contribute to the heparin site. N-linked (GlcNAc...) asparagine glycosylation occurs at asparagine 557. A disordered region spans residues leucine 662–asparagine 697. 2 stretches are compositionally biased toward polar residues: residues glycine 665–proline 678 and threonine 688–asparagine 697. The N-linked (GlcNAc...) asparagine glycan is linked to asparagine 693. A helical transmembrane segment spans residues glycine 704–cysteine 724. Over arginine 725–valine 880 the chain is Cytoplasmic. Disordered regions lie at residues serine 728–arginine 762 and glutamine 775–valine 880. Composition is skewed to low complexity over residues arginine 823 to asparagine 837 and serine 864 to valine 880.

This sequence belongs to the immunoglobulin superfamily. IHOG family. Homodimer. Heterotetramer; 2 iHog chains bind 2 hh chains when facilitated by heparin, heparin is required to promote high-affinity interactions between hh and iHog.

Its subcellular location is the membrane. Mediates response to the active Hedgehog (Hh) protein signal in embryos, functioning upstream or at the level of patched (ptc). The chain is Interference hedgehog from Drosophila yakuba (Fruit fly).